A 1196-amino-acid polypeptide reads, in one-letter code: DNA polymerase beta (1196 aa).

The protein belongs to the DNA polymerase type-B family.

The enzyme catalyses DNA(n) + a 2'-deoxyribonucleoside 5'-triphosphate = DNA(n+1) + diphosphate. Functionally, DNA-directed DNA polymerase involved in viral DNA replication. This chain is DNA polymerase beta, found in African swine fever virus (isolate Pig/Kenya/KEN-50/1950) (ASFV).